A 230-amino-acid chain; its full sequence is 2-phytyl-1,4-naphtoquinone methyltransferase (230 aa).

It belongs to the class I-like SAM-binding methyltransferase superfamily. MenG/UbiE family.

The enzyme catalyses demethylphylloquinol + S-adenosyl-L-methionine = phylloquinol + S-adenosyl-L-homocysteine + H(+). Its pathway is cofactor biosynthesis; phylloquinone biosynthesis. Functionally, methyltransferase required for the conversion of 2-phytyl-1,4-beta-naphthoquinol to phylloquinol. The chain is 2-phytyl-1,4-naphtoquinone methyltransferase from Nostoc punctiforme (strain ATCC 29133 / PCC 73102).